The sequence spans 81 residues: Photosystem I iron-sulfur center (81 aa).

4Fe-4S ferredoxin-type domains lie at 2–31 (SHSV…MIPW) and 39–68 (IAPA…VRVY). The [4Fe-4S] cluster site is built by Cys-11, Cys-14, Cys-17, Cys-21, Cys-48, Cys-51, Cys-54, and Cys-58.

In terms of assembly, the eukaryotic PSI reaction center is composed of at least 11 subunits. [4Fe-4S] cluster serves as cofactor.

It is found in the plastid. Its subcellular location is the chloroplast thylakoid membrane. It carries out the reaction reduced [plastocyanin] + hnu + oxidized [2Fe-2S]-[ferredoxin] = oxidized [plastocyanin] + reduced [2Fe-2S]-[ferredoxin]. Apoprotein for the two 4Fe-4S centers FA and FB of photosystem I (PSI); essential for photochemical activity. FB is the terminal electron acceptor of PSI, donating electrons to ferredoxin. The C-terminus interacts with PsaA/B/D and helps assemble the protein into the PSI complex. Required for binding of PsaD and PsaE to PSI. PSI is a plastocyanin-ferredoxin oxidoreductase, converting photonic excitation into a charge separation, which transfers an electron from the donor P700 chlorophyll pair to the spectroscopically characterized acceptors A0, A1, FX, FA and FB in turn. This Drimys granadensis protein is Photosystem I iron-sulfur center.